A 114-amino-acid polypeptide reads, in one-letter code: FK506-binding protein 1 (114 aa).

Positions 26-114 (GDLVTIHYTG…VFDVELLKIN (89 aa)) constitute a PPIase FKBP-type domain.

This sequence belongs to the FKBP-type PPIase family. FKBP1 subfamily.

It localises to the cytoplasm. The catalysed reaction is [protein]-peptidylproline (omega=180) = [protein]-peptidylproline (omega=0). With respect to regulation, inhibited by both FK506 and rapamycin. In terms of biological role, PPIases accelerate the folding of proteins. It catalyzes the cis-trans isomerization of proline imidic peptide bonds in oligopeptides. This is FK506-binding protein 1 (FPR1) from Kluyveromyces lactis (strain ATCC 8585 / CBS 2359 / DSM 70799 / NBRC 1267 / NRRL Y-1140 / WM37) (Yeast).